The primary structure comprises 78 residues: D-alanyl carrier protein (78 aa).

The Carrier domain occupies 1 to 78 (MEFREQVLNL…KIVEALEELR (78 aa)). Ser-36 bears the O-(pantetheine 4'-phosphoryl)serine mark.

It belongs to the DltC family. Post-translationally, 4'-phosphopantetheine is transferred from CoA to a specific serine of apo-DCP.

It is found in the cytoplasm. Its pathway is cell wall biogenesis; lipoteichoic acid biosynthesis. Carrier protein involved in the D-alanylation of lipoteichoic acid (LTA). The loading of thioester-linked D-alanine onto DltC is catalyzed by D-alanine--D-alanyl carrier protein ligase DltA. The DltC-carried D-alanyl group is further transferred to cell membrane phosphatidylglycerol (PG) by forming an ester bond, probably catalyzed by DltD. D-alanylation of LTA plays an important role in modulating the properties of the cell wall in Gram-positive bacteria, influencing the net charge of the cell wall. The chain is D-alanyl carrier protein from Staphylococcus aureus (strain Mu50 / ATCC 700699).